Here is a 301-residue protein sequence, read N- to C-terminus: N-acetylmuramic acid 6-phosphate etherase (301 aa).

In terms of domain architecture, SIS spans 57 to 220 (IAETFMKNGR…TTGAMIKTGK (164 aa)). Glu85 (proton donor) is an active-site residue. Residue Glu116 is part of the active site.

Belongs to the GCKR-like family. MurNAc-6-P etherase subfamily. As to quaternary structure, homodimer.

The enzyme catalyses N-acetyl-D-muramate 6-phosphate + H2O = N-acetyl-D-glucosamine 6-phosphate + (R)-lactate. It functions in the pathway amino-sugar metabolism; 1,6-anhydro-N-acetylmuramate degradation. It participates in amino-sugar metabolism; N-acetylmuramate degradation. Its pathway is cell wall biogenesis; peptidoglycan recycling. Its function is as follows. Specifically catalyzes the cleavage of the D-lactyl ether substituent of MurNAc 6-phosphate, producing GlcNAc 6-phosphate and D-lactate. Together with AnmK, is also required for the utilization of anhydro-N-acetylmuramic acid (anhMurNAc) either imported from the medium or derived from its own cell wall murein, and thus plays a role in cell wall recycling. The polypeptide is N-acetylmuramic acid 6-phosphate etherase (Pasteurella multocida (strain Pm70)).